Reading from the N-terminus, the 464-residue chain is Gamma-aminobutyric acid receptor subunit alpha-5 (464 aa).

An N-terminal signal peptide occupies residues 1-25 (MDNGMLSRFIMTKTLLVFCISMTLS). The Extracellular portion of the chain corresponds to 26 to 260 (SHFGFSQMPT…FHLKRKIGYF (235 aa)). Residue Asn45 is glycosylated (N-linked (GlcNAc...) asparagine). Arg101 serves as a coordination point for 4-aminobutanoate. The N-linked (GlcNAc...) asparagine glycan is linked to Asn145. Thr164 lines the 4-aminobutanoate pocket. Cys173 and Cys187 form a disulfide bridge. Residues Asn207 and Asn236 are each glycosylated (N-linked (GlcNAc...) asparagine). The next 3 membrane-spanning stretches (helical) occupy residues 261 to 281 (VIQT…SFWL), 287 to 308 (PART…ISAR), and 319 to 340 (AMDW…EFAT). The Cytoplasmic portion of the chain corresponds to 341–429 (VNYFTKRGWA…TYNSISKIDK (89 aa)). Residue Lys355 forms a Glycyl lysine isopeptide (Lys-Gly) (interchain with G-Cter in ubiquitin) linkage. The tract at residues 382–414 (KLTHPPNIPKEQLPGGTGNAVGTASIRASEEKT) is disordered. The chain crosses the membrane as a helical span at residues 430-450 (MSRIVFPILFGTFNLVYWATY).

This sequence belongs to the ligand-gated ion channel (TC 1.A.9) family. Gamma-aminobutyric acid receptor (TC 1.A.9.5) subfamily. GABRA5 sub-subfamily. As to quaternary structure, heteropentamer, formed by a combination of alpha (GABRA1-6), beta (GABRB1-3), gamma (GABRG1-3), delta (GABRD), epsilon (GABRE), rho (GABRR1-3), pi (GABRP) and theta (GABRQ) chains, each subunit exhibiting distinct physiological and pharmacological properties. Expressed in brain areas such as cerebral cortex, hippocampal formation and olfactory bulb granular layer.

Its subcellular location is the postsynaptic cell membrane. The protein localises to the cell membrane. It catalyses the reaction chloride(in) = chloride(out). Allosterically potentiated by alphaxalone. Allosterically inhibited by pregnenolone sulfate. Inhibited by zinc and lanthanum. Alpha subunit of the heteropentameric ligand-gated chloride channel gated by gamma-aminobutyric acid (GABA), a major inhibitory neurotransmitter in the brain. GABA-gated chloride channels, also named GABA(A) receptors (GABAAR), consist of five subunits arranged around a central pore and contain GABA active binding site(s) located at the alpha and beta subunit interface(s). When activated by GABA, GABAARs selectively allow the flow of chloride anions across the cell membrane down their electrochemical gradient. GABAARs containing alpha-5/GABRA5 subunits are mainly extrasynaptic and contribute to the tonic GABAergic inhibition in the hippocampus. Extrasynaptic alpha-5-containing GABAARs in CA1 pyramidal neurons play a role in learning and memory processes. The chain is Gamma-aminobutyric acid receptor subunit alpha-5 from Rattus norvegicus (Rat).